A 158-amino-acid polypeptide reads, in one-letter code: CD-NTase/cGAS isopeptidase (158 aa).

Catalysis depends on glutamate 38, which acts as the Proton donor/acceptor. The Zn(2+) site is built by histidine 100, histidine 102, and aspartate 113.

Belongs to the peptidase M67B family. Cap3 isopeptidase subfamily.

Functionally, metalloprotease priming reversal component of a CBASS antivirus system. CBASS (cyclic oligonucleotide-based antiphage signaling system) provides immunity against bacteriophages. The CD-NTase protein synthesizes cyclic nucleotides in response to infection; these serve as specific second messenger signals. The signals activate a diverse range of effectors, leading to bacterial cell death and thus abortive phage infection. A type II-A(GA) CBASS system. In terms of biological role, reverses the primed state of CdnA, the CD-NTase. The capV-cdnA-cap2-cap3 operon provides about 10(4)-fold protection in strain BWHPSA011 against infection by phage PaMx41. In P.aeruginosa strain PAO1 it confers protection against phages PaMx41 and JBD18 but not JBD67 (JBD18 and JBD67 do not replicate in BWHPSA011 / Pa011). When acb2 in JBD67 is deleted this CBASS operon then protects against JDB67 also. This CBASS system limits prophage induction of lysogenized JBD67 as well as viral lytic replication. The sequence is that of CD-NTase/cGAS isopeptidase from Pseudomonas aeruginosa (strain BWHPSA011 / Pa011).